The primary structure comprises 153 residues: Protein SREK1IP1 (153 aa).

Residues 13-30 (AGCRKCGYPGHLTFECRN) form a CCHC-type zinc finger. Residues 44-153 (VSSTSSEDSD…SPNRSEVTKK (110 aa)) are disordered. A Phosphoserine modification is found at Ser52. Basic and acidic residues predominate over residues 66-84 (QEKRINEEEEKKKEKSREK). Over residues 85–94 (IKLKKKRKRS) the composition is skewed to basic residues. A phosphoserine mark is found at Ser96 and Ser97. Residues 106 to 141 (QKKQKYQKKEKKKEKKNKSKKGKHHKKEKKKRKKEK) show a composition bias toward basic residues.

Interacts with SREK1/SFRS12.

Possible splicing regulator involved in the control of cellular survival. The polypeptide is Protein SREK1IP1 (Srek1ip1) (Rattus norvegicus (Rat)).